The following is a 495-amino-acid chain: Protein YhjJ (495 aa).

An N-terminal signal peptide occupies residues 1–24 (MQGTKIRLLAGSLLMLASAGYVQA).

The protein belongs to the peptidase M16 family.

The protein localises to the periplasm. This is Protein YhjJ (yhjJ) from Salmonella typhimurium (strain LT2 / SGSC1412 / ATCC 700720).